We begin with the raw amino-acid sequence, 504 residues long: ATP synthase subunit alpha, chloroplastic (504 aa).

Position 170–177 (Gly-170–Thr-177) interacts with ATP.

This sequence belongs to the ATPase alpha/beta chains family. In terms of assembly, F-type ATPases have 2 components, CF(1) - the catalytic core - and CF(0) - the membrane proton channel. CF(1) has five subunits: alpha(3), beta(3), gamma(1), delta(1), epsilon(1). CF(0) has four main subunits: a, b, b' and c.

The protein resides in the plastid. The protein localises to the chloroplast thylakoid membrane. The enzyme catalyses ATP + H2O + 4 H(+)(in) = ADP + phosphate + 5 H(+)(out). Functionally, produces ATP from ADP in the presence of a proton gradient across the membrane. The alpha chain is a regulatory subunit. The sequence is that of ATP synthase subunit alpha, chloroplastic from Cyanidium caldarium (Red alga).